The primary structure comprises 352 residues: 4-hydroxy-2-oxovalerate aldolase (352 aa).

The 253-residue stretch at 13–265 folds into the Pyruvate carboxyltransferase domain; it reads VRLTDTSLRD…KTGIDFFDIA (253 aa). 21–22 lines the substrate pocket; sequence RD. Asp22 is a binding site for Mn(2+). His25 acts as the Proton acceptor in catalysis. Substrate contacts are provided by Ser175 and His204. Mn(2+)-binding residues include His204 and His206. Tyr295 contributes to the substrate binding site.

This sequence belongs to the 4-hydroxy-2-oxovalerate aldolase family.

The enzyme catalyses (S)-4-hydroxy-2-oxopentanoate = acetaldehyde + pyruvate. The protein is 4-hydroxy-2-oxovalerate aldolase of Mycobacterium avium (strain 104).